A 109-amino-acid polypeptide reads, in one-letter code: Elongin-C (109 aa).

This sequence belongs to the SKP1 family.

It localises to the nucleus. Functionally, SIII, also known as elongin, is a general transcription elongation factor that increases the RNA polymerase II transcription elongation past template-encoded arresting sites. Subunit A is transcriptionally active and its transcription activity is strongly enhanced by binding to the dimeric complex of the SIII regulatory subunits B and C (elongin BC complex). In terms of biological role, the elongin BC complex seems to be involved as an adapter protein in the proteasomal degradation of target proteins via different E3 ubiquitin ligase complexes. The chain is Elongin-C (tceb1) from Dictyostelium discoideum (Social amoeba).